Reading from the N-terminus, the 354-residue chain is Kelch domain-containing protein 8B (354 aa).

Kelch repeat units lie at residues 1-31 (MATG…FQDG), 32-79 (HLLV…VLGK), 81-127 (VLVV…ERDG), 128-175 (MVYA…LHGN), 176-222 (KIYV…MAEG), 224-281 (VFSL…SLGD), 282-329 (HVVA…QAGP), and 331-354 (LFAI…RDGV).

The protein resides in the cytoplasm. It localises to the midbody. Involved in pinching off the separated nuclei at the cleavage furrow and in cytokinesis. Required for mitotic integrity and maintenance of chromosomal stability. Protects cells against mitotic errors, centrosomal amplification, micronucleus formation and aneuploidy. Plays a key role of midbody function involving abscission of the daughter cells during cytokinesis and appropriate chromosomal and nuclear segregation into the daughter cells. In Bos taurus (Bovine), this protein is Kelch domain-containing protein 8B (KLHDC8B).